A 347-amino-acid chain; its full sequence is Nicotinate-nucleotide--dimethylbenzimidazole phosphoribosyltransferase (347 aa).

Residue Glu316 is the Proton acceptor of the active site.

The protein belongs to the CobT family.

The catalysed reaction is 5,6-dimethylbenzimidazole + nicotinate beta-D-ribonucleotide = alpha-ribazole 5'-phosphate + nicotinate + H(+). Its pathway is nucleoside biosynthesis; alpha-ribazole biosynthesis; alpha-ribazole from 5,6-dimethylbenzimidazole: step 1/2. Catalyzes the synthesis of alpha-ribazole-5'-phosphate from nicotinate mononucleotide (NAMN) and 5,6-dimethylbenzimidazole (DMB). The polypeptide is Nicotinate-nucleotide--dimethylbenzimidazole phosphoribosyltransferase (Vibrio parahaemolyticus serotype O3:K6 (strain RIMD 2210633)).